The primary structure comprises 317 residues: Tenomodulin (317 aa).

Topologically, residues 1 to 30 (MAKNPPENCEGCHILNAEALKSKKICKSLK) are cytoplasmic. Residues 31 to 50 (ICGLVFGILALTLIVLFWGS) traverse the membrane as a helical; Signal-anchor for type II membrane protein segment. The Extracellular portion of the chain corresponds to 51–317 (KHFWPEVSKK…WWVARMLGRV (267 aa)). The BRICHOS domain maps to 93-186 (GNGTDETLEV…ICDNVTMYWI (94 aa)). A glycan (N-linked (GlcNAc...) asparagine) is linked at asparagine 94. A disulfide bridge connects residues cysteine 120 and cysteine 178. An N-linked (GlcNAc...) asparagine glycan is attached at asparagine 180. Phosphoserine is present on serine 239.

It belongs to the chondromodulin-1 family. Widely expressed with highest expression in tendons and ligaments, in the diaphragm, eye and skeletal muscle. Expressed in neuronal cells of all brain regions. Very low expression, if any, in glial cells.

It localises to the membrane. The protein localises to the nucleus envelope. Its function is as follows. May be an angiogenesis inhibitor. The polypeptide is Tenomodulin (Tnmd) (Mus musculus (Mouse)).